The primary structure comprises 373 residues: Dual-specificity RNA methyltransferase RlmN (373 aa).

Glu-94 serves as the catalytic Proton acceptor. Positions 100 to 339 (EEDRATLCVS…VIVRKTRGDD (240 aa)) constitute a Radical SAM core domain. Cysteines 107 and 344 form a disulfide. 3 residues coordinate [4Fe-4S] cluster: Cys-114, Cys-118, and Cys-121. S-adenosyl-L-methionine-binding positions include 168–169 (GE), Ser-200, 222–224 (SIH), and Asn-301. Catalysis depends on Cys-344, which acts as the S-methylcysteine intermediate.

It belongs to the radical SAM superfamily. RlmN family. [4Fe-4S] cluster is required as a cofactor.

Its subcellular location is the cytoplasm. The catalysed reaction is adenosine(2503) in 23S rRNA + 2 reduced [2Fe-2S]-[ferredoxin] + 2 S-adenosyl-L-methionine = 2-methyladenosine(2503) in 23S rRNA + 5'-deoxyadenosine + L-methionine + 2 oxidized [2Fe-2S]-[ferredoxin] + S-adenosyl-L-homocysteine. It carries out the reaction adenosine(37) in tRNA + 2 reduced [2Fe-2S]-[ferredoxin] + 2 S-adenosyl-L-methionine = 2-methyladenosine(37) in tRNA + 5'-deoxyadenosine + L-methionine + 2 oxidized [2Fe-2S]-[ferredoxin] + S-adenosyl-L-homocysteine. In terms of biological role, specifically methylates position 2 of adenine 2503 in 23S rRNA and position 2 of adenine 37 in tRNAs. m2A2503 modification seems to play a crucial role in the proofreading step occurring at the peptidyl transferase center and thus would serve to optimize ribosomal fidelity. The polypeptide is Dual-specificity RNA methyltransferase RlmN (Shewanella frigidimarina (strain NCIMB 400)).